The sequence spans 457 residues: Bifunctional protein GlmU (457 aa).

The segment at 1–232 is pyrophosphorylase; sequence MAKVAAIVLA…PMEVMGVNDR (232 aa). Residues 9–12, K23, Q75, and 80–81 each bind UDP-N-acetyl-alpha-D-glucosamine; these read LAAG and GT. D105 contacts Mg(2+). UDP-N-acetyl-alpha-D-glucosamine is bound by residues G142, E157, N172, and N230. Residue N230 coordinates Mg(2+). The interval 233–253 is linker; it reads VQLAEAGRIIRVRINKALMVA. The segment at 254–457 is N-acetyltransferase; the sequence is GTTIIDPETT…NKEGWKLKNK (204 aa). UDP-N-acetyl-alpha-D-glucosamine-binding residues include R336 and K354. The active-site Proton acceptor is H366. UDP-N-acetyl-alpha-D-glucosamine is bound by residues Y369 and N380. Residues 389–390, S408, A426, and R443 each bind acetyl-CoA; that span reads NY.

In the N-terminal section; belongs to the N-acetylglucosamine-1-phosphate uridyltransferase family. It in the C-terminal section; belongs to the transferase hexapeptide repeat family. As to quaternary structure, homotrimer. The cofactor is Mg(2+).

Its subcellular location is the cytoplasm. The catalysed reaction is alpha-D-glucosamine 1-phosphate + acetyl-CoA = N-acetyl-alpha-D-glucosamine 1-phosphate + CoA + H(+). The enzyme catalyses N-acetyl-alpha-D-glucosamine 1-phosphate + UTP + H(+) = UDP-N-acetyl-alpha-D-glucosamine + diphosphate. It functions in the pathway nucleotide-sugar biosynthesis; UDP-N-acetyl-alpha-D-glucosamine biosynthesis; N-acetyl-alpha-D-glucosamine 1-phosphate from alpha-D-glucosamine 6-phosphate (route II): step 2/2. The protein operates within nucleotide-sugar biosynthesis; UDP-N-acetyl-alpha-D-glucosamine biosynthesis; UDP-N-acetyl-alpha-D-glucosamine from N-acetyl-alpha-D-glucosamine 1-phosphate: step 1/1. It participates in bacterial outer membrane biogenesis; LPS lipid A biosynthesis. In terms of biological role, catalyzes the last two sequential reactions in the de novo biosynthetic pathway for UDP-N-acetylglucosamine (UDP-GlcNAc). The C-terminal domain catalyzes the transfer of acetyl group from acetyl coenzyme A to glucosamine-1-phosphate (GlcN-1-P) to produce N-acetylglucosamine-1-phosphate (GlcNAc-1-P), which is converted into UDP-GlcNAc by the transfer of uridine 5-monophosphate (from uridine 5-triphosphate), a reaction catalyzed by the N-terminal domain. This Geotalea daltonii (strain DSM 22248 / JCM 15807 / FRC-32) (Geobacter daltonii) protein is Bifunctional protein GlmU.